The chain runs to 870 residues: MFFACYCALRTNVKKYRYQDEDAPHDHSLPRLTHEVRGPELVHVSEKNLSQIENVHGYVLQSHISPLKASPAPIIVNTDTLDTIPYVNGTEIEYEFEEITLERGNSGLGFSIAGGTDNPHIGDDPGIFITKIIPGGAAAEDGRLRVNDCILRVNEVDVSEVSHSKAVEALKEAGSIVRLYVRRRRPILETVVEIKLFKGPKGLGFSIAGGVGNQHIPGDNSIYVTKIIDGGAAQKDGRLQVGDRLLMVNNYSLEEVTHEEAVAILKNTSEVVYLKVGKPTTIYMTDPYGPPDITHSYSPPMENHLLSGNNGTLEYKTSLPPISPGRYSPIPKHMLVDDDYTRPPEPVYSTVNKLCDKPASPRHYSPVECDKSFLLSAPYSHYHLGLLPDSEMTSHSQHSTATRQPSMTLQRAVSLEGEPRKVVLHKGSTGLGFNIVGGEDGEGIFVSFILAGGPADLSGELQRGDQILSVNGIDLRGASHEQAAAALKGAGQTVTIIAQYQPEDYARFEAKIHDLREQMMNHSMSSGSGSLRTNQKRSLYVRAMFDYDKSKDSGLPSQGLSFKYGDILHVINASDDEWWQARRVMLEGDSEEMGVIPSKRRVERKERARLKTVKFNAKPGVIDSKGSFNDKRKKSFIFSRKFPFYKNKEQSEQETSDPERGQEDLILSYEPVTRQEINYTRPVIILGPMKDRINDDLISEFPDKFGSCVPHTTRPKRDYEVDGRDYHFVISREQMEKDIQEHKFIEAGQYNDNLYGTSVQSVRFVAERGKHCILDVSGNAIKRLQVAQLYPIAIFIKPRSLEPLMEMNKRLTEEQAKKTYDRAIKLEQEFGEYFTAIVQGDTLEDIYNQCKLVIEEQSGPFIWIPSKEKL.

2 S-palmitoyl cysteine lipidation sites follow: Cys-5 and Cys-7. Phosphoserine is present on Ser-28. Tyr-58 is subject to Phosphotyrosine. Ser-65 is modified (phosphoserine). 2 consecutive PDZ domains span residues 98–184 (EITL…VRRR) and 193–279 (EIKL…VGKP). Ser-307, Ser-328, Ser-360, Ser-365, Ser-406, and Ser-414 each carry phosphoserine. Positions 421 to 501 (KVVLHKGSTG…QTVTIIAQYQ (81 aa)) constitute a PDZ 3 domain. Position 505 is a phosphotyrosine (Tyr-505). Residues Ser-528, Ser-530, Ser-553, Ser-627, and Ser-635 each carry the phosphoserine modification. The SH3 domain occupies 536-606 (KRSLYVRAMF…PSKRRVERKE (71 aa)). The 176-residue stretch at 680-855 (TRPVIILGPM…IYNQCKLVIE (176 aa)) folds into the Guanylate kinase-like domain. A phosphotyrosine mark is found at Tyr-750 and Tyr-755.

It belongs to the MAGUK family. In terms of assembly, interacts through its PDZ domains with NETO1. Interacts with NOS1/nNOS through second PDZ domain. Interacts with KCNJ2/Kir2.1 (via C-terminus) through one of its PDZ domains. Interacts with KCNJ4, Interacts with FRMPD4 (via C-terminus). Interacts with LRFN1, LRFN2 and LRFN4. Interacts with FASLG. Interacts with KCNJ4. Interacts with ADAM22. Interacts with DGKI (via PDZ-binding motif). In terms of processing, palmitoylation of isoform 1 is not required for targeting to postsynaptic density.

It localises to the cell membrane. Its subcellular location is the postsynaptic density. The protein resides in the synapse. The protein localises to the membrane. It is found in the cell projection. It localises to the axon. Its subcellular location is the perikaryon. Its function is as follows. Required for perception of chronic pain through NMDA receptor signaling. Regulates surface expression of NMDA receptors in dorsal horn neurons of the spinal cord. Interacts with the cytoplasmic tail of NMDA receptor subunits as well as inward rectifying potassium channels. Involved in regulation of synaptic stability at cholinergic synapses. Part of the postsynaptic protein scaffold of excitatory synapses. The polypeptide is Disks large homolog 2 (DLG2) (Homo sapiens (Human)).